Here is a 152-residue protein sequence, read N- to C-terminus: Small ribosomal subunit protein uS19z (152 aa).

Belongs to the universal ribosomal protein uS19 family.

The protein resides in the cytoplasm. In Arabidopsis thaliana (Mouse-ear cress), this protein is Small ribosomal subunit protein uS19z (RPS15B).